The primary structure comprises 610 residues: Myosin light chain kinase 2, skeletal/cardiac muscle (610 aa).

Disordered regions lie at residues 1–168 (MATE…HSPS) and 196–240 (VSET…DTSQ). Ala-2 is subject to N-acetylalanine. Basic and acidic residues-rich tracts occupy residues 32-63 (SEKE…KKNP) and 70-82 (KTPE…KKGD). Residues 94-109 (SGEGDGGGGPAEGGTG) are compositionally biased toward gly residues. The segment covering 141-157 (GEAKAGKKAAECREAGR) has biased composition (basic and acidic residues). Phosphoserine is present on residues Ser-160, Ser-166, and Ser-168. Residues 299 to 554 (MNSKEALGGG…AEQCLAHPWL (256 aa)) form the Protein kinase domain. Residues 305-313 (LGGGKFGAV) and Lys-328 contribute to the ATP site. Residue Asp-420 is the Proton acceptor of the active site. Position 459 is a phosphothreonine (Thr-459). The segment at 588–600 (IAVSAANRFKKIS) is calmodulin-binding.

Belongs to the protein kinase superfamily. CAMK Ser/Thr protein kinase family. In terms of assembly, may interact with centrin.

It is found in the cytoplasm. The catalysed reaction is L-seryl-[myosin light chain] + ATP = O-phospho-L-seryl-[myosin light chain] + ADP + H(+). It carries out the reaction L-threonyl-[myosin light chain] + ATP = O-phospho-L-threonyl-[myosin light chain] + ADP + H(+). Implicated in the level of global muscle contraction and cardiac function. Phosphorylates a specific serine in the N-terminus of a myosin light chain. This Rattus norvegicus (Rat) protein is Myosin light chain kinase 2, skeletal/cardiac muscle (Mylk2).